A 708-amino-acid polypeptide reads, in one-letter code: Ubiquitin thioesterase Zranb1 (708 aa).

The RanBP2-type 1 zinc-finger motif lies at 3 to 33; that stretch reads EHGIKWACEYCTYENWPSAIKCTMCRAQRPS. The Zn(2+) site is built by Cys10, Cys13, Cys24, and Cys27. The interval 38-73 is disordered; sequence TEDPFKSGSSDVGRDWDPSSTEGGSSPLICPDSSAR. 2 RanBP2-type zinc fingers span residues 84 to 113 and 149 to 178; these read NANKWSCHMCTYLNWPRAIRCTQCLSQRRT and RTQHWTCSVCTYENWAKAKKCVVCDHPRPN. Zn(2+) contacts are provided by Cys90, Cys93, Cys104, Cys107, Cys155, Cys158, Cys169, and Cys172. The tract at residues 202 to 224 is disordered; the sequence is RWRGGCSSGNSQRRSPPTTKRDS. The span at 209–219 shows a compositional bias: polar residues; the sequence is SGNSQRRSPPT. ANK repeat units lie at residues 260–290 and 313–340; these read KKTDWLFLNACVGVVEGDLAAIEAYKSSGGD and YTLVHLAIRFQRQDMLAILLTEVSQQAA. In terms of domain architecture, OTU spans 432-592; it reads LYALWNRTAG…RGHFSALVAM (161 aa). Cys443 acts as the Nucleophile in catalysis. The active-site Proton acceptor is the His585.

This sequence belongs to the peptidase C64 family. Interacts with TRAF6. Interacts with APC.

The protein localises to the cytoplasm. Its subcellular location is the nucleus. The catalysed reaction is Thiol-dependent hydrolysis of ester, thioester, amide, peptide and isopeptide bonds formed by the C-terminal Gly of ubiquitin (a 76-residue protein attached to proteins as an intracellular targeting signal).. In terms of biological role, ubiquitin thioesterase, which specifically hydrolyzes 'Lys-29'-linked and 'Lys-33'-linked diubiquitin. Also cleaves 'Lys-63'-linked chains, but with 40-fold less efficiency compared to 'Lys-29'-linked ones. Positive regulator of the Wnt signaling pathway that deubiquitinates APC protein, a negative regulator of Wnt-mediated transcription. Acts as a regulator of autophagy by mediating deubiquitination of PIK3C3/VPS34, thereby promoting autophagosome maturation. Plays a role in the regulation of cell morphology and cytoskeletal organization. Required in the stress fiber dynamics and cell migration. In Mus musculus (Mouse), this protein is Ubiquitin thioesterase Zranb1.